The primary structure comprises 465 residues: tRNA-2-methylthio-N(6)-dimethylallyladenosine synthase (465 aa).

Residues 18-136 (RKLYIETYGC…LPNLVGAAEQ (119 aa)) enclose the MTTase N-terminal domain. C27, C63, C100, C174, C178, and C181 together coordinate [4Fe-4S] cluster. The region spanning 160–392 (GGVHINGFVS…IALQNRLSEE (233 aa)) is the Radical SAM core domain. The TRAM domain occupies 395–458 (KRDISKTFEV…SATLFGEVVE (64 aa)).

It belongs to the methylthiotransferase family. MiaB subfamily. As to quaternary structure, monomer. The cofactor is [4Fe-4S] cluster.

The protein resides in the cytoplasm. It carries out the reaction N(6)-dimethylallyladenosine(37) in tRNA + (sulfur carrier)-SH + AH2 + 2 S-adenosyl-L-methionine = 2-methylsulfanyl-N(6)-dimethylallyladenosine(37) in tRNA + (sulfur carrier)-H + 5'-deoxyadenosine + L-methionine + A + S-adenosyl-L-homocysteine + 2 H(+). Its function is as follows. Catalyzes the methylthiolation of N6-(dimethylallyl)adenosine (i(6)A), leading to the formation of 2-methylthio-N6-(dimethylallyl)adenosine (ms(2)i(6)A) at position 37 in tRNAs that read codons beginning with uridine. This chain is tRNA-2-methylthio-N(6)-dimethylallyladenosine synthase, found in Porphyromonas gingivalis (strain ATCC 33277 / DSM 20709 / CIP 103683 / JCM 12257 / NCTC 11834 / 2561).